The chain runs to 344 residues: Uroporphyrinogen decarboxylase (344 aa).

Residues 26–30 (RQAGR), aspartate 76, tyrosine 152, serine 207, and histidine 323 each bind substrate.

This sequence belongs to the uroporphyrinogen decarboxylase family. Homodimer.

The protein resides in the cytoplasm. The enzyme catalyses uroporphyrinogen III + 4 H(+) = coproporphyrinogen III + 4 CO2. Its pathway is porphyrin-containing compound metabolism; protoporphyrin-IX biosynthesis; coproporphyrinogen-III from 5-aminolevulinate: step 4/4. Its function is as follows. Catalyzes the decarboxylation of four acetate groups of uroporphyrinogen-III to yield coproporphyrinogen-III. The chain is Uroporphyrinogen decarboxylase from Hyphomonas neptunium (strain ATCC 15444).